We begin with the raw amino-acid sequence, 345 residues long: MESTASAVPPSSEDLVADTKENNQPPFCGTTVSGSSQAPLHPHSPTLQQDEREELTLHQSGEQQLGNSGELRQEEELPKARRGGWNKGRKRKRSPRDNNAPKAPLTGYVRFMNERREQLRTERPDVPFPEITRIVGSEWSKLPAHEKQHYLDEAEKDKERYTKELQKYQNTDAYQTYSRKAKSRQKGRQQRQEGVRGVPSNTEKESILKERPIFDIPIFTEEFLNHSKAREAELRQLRKSNMEFEERNAALQKHVESMRSAVQRLEAELSQEHERNSLLQQHLQSVRQALTHCLQSVPVPGTTETPTLETIDLYMSRLQNAVLTHPKESEVIISGVREVLSQLEG.

2 disordered regions span residues 1-130 (MEST…PFPE) and 166-206 (QKYQ…EKES). 2 stretches are compositionally biased toward polar residues: residues 22–38 (NNQP…SSQA) and 57–67 (LHQSGEQQLGN). Residues 80 to 94 (ARRGGWNKGRKRKRS) are compositionally biased toward basic residues. Residues 101–169 (PKAPLTGYVR…RYTKELQKYQ (69 aa)) constitute a DNA-binding region (HMG box). Residues 112–125 (MNERREQLRTERPD) are compositionally biased toward basic and acidic residues. The span at 167–178 (KYQNTDAYQTYS) shows a compositional bias: polar residues. Basic residues predominate over residues 179–189 (RKAKSRQKGRQ). A coiled-coil region spans residues 227–285 (SKAREAELRQLRKSNMEFEERNAALQKHVESMRSAVQRLEAELSQEHERNSLLQQHLQS).

It is found in the nucleus. Plays a role in neuronal differentiation. The chain is High mobility group protein 20A (hmg20a) from Xenopus laevis (African clawed frog).